The sequence spans 154 residues: Ribosome maturation factor RimP (154 aa).

Belongs to the RimP family.

It localises to the cytoplasm. Required for maturation of 30S ribosomal subunits. This chain is Ribosome maturation factor RimP, found in Yersinia pseudotuberculosis serotype O:1b (strain IP 31758).